Here is a 132-residue protein sequence, read N- to C-terminus: CDGSH iron-sulfur domain-containing protein 2 homolog (132 aa).

Residues 1-35 (MEPISHLVKSSLPNYLSSLPVPDSLGGWFKLSFKD) are Lumenal-facing. A helical transmembrane segment spans residues 36–58 (WLALIPPTAVLAGLGYTAYLAFC). The Cytoplasmic portion of the chain corresponds to 59–132 (PAAQCSAKSA…VGPVVVSKKK (74 aa)). Residues C97, C99, C108, and H112 each coordinate [2Fe-2S] cluster.

It belongs to the CISD protein family. CISD2 subfamily. [2Fe-2S] cluster serves as cofactor.

It is found in the endoplasmic reticulum membrane. In Drosophila grimshawi (Hawaiian fruit fly), this protein is CDGSH iron-sulfur domain-containing protein 2 homolog.